Consider the following 537-residue polypeptide: Probable protein kinase UbiB (537 aa).

The helical transmembrane segment at 30 to 47 (LLPWWLRALGYLLPWRWL) threads the bilayer. Positions 126 to 490 (RFDSEPLASA…KRERHDHHLL (365 aa)) constitute a Protein kinase domain. ATP-binding positions include 132 to 140 (LASASVAQV) and lysine 154. The Proton acceptor role is filled by aspartate 289. 2 helical membrane-spanning segments follow: residues 489 to 507 (LLRL…LALQ) and 513 to 530 (ANAW…YLLV).

Belongs to the ABC1 family. UbiB subfamily.

The protein localises to the cell inner membrane. The protein operates within cofactor biosynthesis; ubiquinone biosynthesis [regulation]. Is probably a protein kinase regulator of UbiI activity which is involved in aerobic coenzyme Q (ubiquinone) biosynthesis. The chain is Probable protein kinase UbiB from Azotobacter vinelandii (strain DJ / ATCC BAA-1303).